Consider the following 388-residue polypeptide: Succinate--CoA ligase [ADP-forming] subunit beta (388 aa).

One can recognise an ATP-grasp domain in the interval 9–244 (KELFRTYGIP…TDEEDPLEVE (236 aa)). Residues K46, 53–55 (GRG), E99, V102, and E107 each bind ATP. The Mg(2+) site is built by N199 and D213. Substrate is bound by residues N264 and 321-323 (GIL).

It belongs to the succinate/malate CoA ligase beta subunit family. Heterotetramer of two alpha and two beta subunits. Requires Mg(2+) as cofactor.

It carries out the reaction succinate + ATP + CoA = succinyl-CoA + ADP + phosphate. The enzyme catalyses GTP + succinate + CoA = succinyl-CoA + GDP + phosphate. Its pathway is carbohydrate metabolism; tricarboxylic acid cycle; succinate from succinyl-CoA (ligase route): step 1/1. Its function is as follows. Succinyl-CoA synthetase functions in the citric acid cycle (TCA), coupling the hydrolysis of succinyl-CoA to the synthesis of either ATP or GTP and thus represents the only step of substrate-level phosphorylation in the TCA. The beta subunit provides nucleotide specificity of the enzyme and binds the substrate succinate, while the binding sites for coenzyme A and phosphate are found in the alpha subunit. The chain is Succinate--CoA ligase [ADP-forming] subunit beta from Desulfosudis oleivorans (strain DSM 6200 / JCM 39069 / Hxd3) (Desulfococcus oleovorans).